The primary structure comprises 135 residues: ATP synthase epsilon chain, chloroplastic (135 aa).

The protein belongs to the ATPase epsilon chain family. As to quaternary structure, F-type ATPases have 2 components, CF(1) - the catalytic core - and CF(0) - the membrane proton channel. CF(1) has five subunits: alpha(3), beta(3), gamma(1), delta(1), epsilon(1). CF(0) has three main subunits: a, b and c.

The protein localises to the plastid. It localises to the chloroplast thylakoid membrane. Functionally, produces ATP from ADP in the presence of a proton gradient across the membrane. The chain is ATP synthase epsilon chain, chloroplastic from Marchantia polymorpha (Common liverwort).